A 779-amino-acid chain; its full sequence is Cysteine-rich protein 2-binding protein (779 aa).

Positions M1–G34 are disordered. S4 carries the phosphoserine modification. K230 carries the post-translational modification N6-acetyllysine. Disordered regions lie at residues S247 to F292, L314 to T345, and P360 to Y457. A compositionally biased stretch (basic and acidic residues) spans M255–K275. Residue S284 is modified to Phosphoserine. K291 carries the N6-acetyllysine modification. Residues L314–S334 show a composition bias toward low complexity. Basic and acidic residues-rich tracts occupy residues R402–G423 and K443–P452. S413 is subject to Phosphoserine. An N-acetyltransferase domain is found at L635–R779.

As to quaternary structure, interacts with the LIM 1 domain of CSRP2. Component of the ADA2A-containing complex (ATAC), composed of CSRP2BP, KAT2A, TADA2L, TADA3L, ZZ3, MBIP, WDR5, YEATS2, CCDC101 and DR1. In the complex, it probably interacts directly with KAT2A, MBIP and WDR5.

The protein resides in the nucleus. Its subcellular location is the cytoplasm. Component of the ATAC complex, a complex with histone acetyltransferase activity on histones H3 and H4. May function as a scaffold for the ATAC complex to promote ATAC complex stability. Has also weak histone acetyltransferase activity toward histone H4. Required for the normal progression through G1 and G2/M phases of the cell cycle. This chain is Cysteine-rich protein 2-binding protein, found in Mus musculus (Mouse).